The sequence spans 343 residues: DNA-directed RNA polymerase subunit alpha (343 aa).

Residues 1-239 (MGETVTIQKN…DQLNVFVNFE (239 aa)) are alpha N-terminal domain (alpha-NTD). The segment at 255 to 343 (FNPAFLKKVD…ELAKRFEDHY (89 aa)) is alpha C-terminal domain (alpha-CTD).

The protein belongs to the RNA polymerase alpha chain family. As to quaternary structure, homodimer. The RNAP catalytic core consists of 2 alpha, 1 beta, 1 beta' and 1 omega subunit. When a sigma factor is associated with the core the holoenzyme is formed, which can initiate transcription.

The enzyme catalyses RNA(n) + a ribonucleoside 5'-triphosphate = RNA(n+1) + diphosphate. Its function is as follows. DNA-dependent RNA polymerase catalyzes the transcription of DNA into RNA using the four ribonucleoside triphosphates as substrates. The protein is DNA-directed RNA polymerase subunit alpha of Bradyrhizobium diazoefficiens (strain JCM 10833 / BCRC 13528 / IAM 13628 / NBRC 14792 / USDA 110).